The primary structure comprises 423 residues: Endochitinase 1 (423 aa).

The signal sequence occupies residues 1–22 (MPSLFAQSLAIIATLQATLGLA). A GH18 domain is found at 39–401 (YVNAVYFTNW…GTSSNKLGGP (363 aa)). Residues N74, N78, and N96 are each glycosylated (N-linked (GlcNAc...) asparagine). Chitin is bound by residues 103–104 (GT) and 130–133 (GGWT). E172 acts as the Proton donor in catalysis. Residues Y173 and 238–241 (MAYD) contribute to the chitin site. An N-linked (GlcNAc...) asparagine glycan is attached at N248. W378 is a binding site for chitin. The segment at 380-423 (ASSDRSGSQSLIGTSSNKLGGPDSTENLLNYPDSKYDNMRKQMA) is disordered. Positions 383 to 407 (DRSGSQSLIGTSSNKLGGPDSTENL) are enriched in polar residues. Over residues 413–423 (SKYDNMRKQMA) the composition is skewed to basic and acidic residues.

Belongs to the glycosyl hydrolase 18 family. Chitinase class V subfamily.

It localises to the secreted. The enzyme catalyses Random endo-hydrolysis of N-acetyl-beta-D-glucosaminide (1-&gt;4)-beta-linkages in chitin and chitodextrins.. In terms of biological role, secreted chitinase involved in the degradation of chitin, a component of the cell walls of fungi and exoskeletal elements of some animals (including worms and arthropods). Participates in the infection process and directly acts in the penetration process of the host cuticle. This is Endochitinase 1 (chit1) from Metarhizium anisopliae (Entomophthora anisopliae).